A 155-amino-acid chain; its full sequence is Small ribosomal subunit protein uS7cz/uS7cy (155 aa).

It belongs to the universal ribosomal protein uS7 family. As to quaternary structure, part of the 30S ribosomal subunit.

It localises to the plastid. The protein resides in the chloroplast. Functionally, one of the primary rRNA binding proteins, it binds directly to 16S rRNA where it nucleates assembly of the head domain of the 30S subunit. In Pelargonium hortorum (Common geranium), this protein is Small ribosomal subunit protein uS7cz/uS7cy (rps7-A).